The primary structure comprises 1006 residues: GATA zinc finger domain-containing protein 7 (1006 aa).

Positions 55–70 (SSSNNFINNHHNNQSS) are enriched in low complexity. Disordered regions lie at residues 55 to 116 (SSSN…APNL), 128 to 248 (PFQN…DPFY), 381 to 499 (NAKK…PLST), 528 to 638 (STSG…SSNS), and 657 to 800 (YNSN…NYHD). Polar residues predominate over residues 71–86 (DIHSISQSTPNLSTLI). 2 stretches are compositionally biased toward low complexity: residues 87–110 (SSSS…NSSS) and 128–158 (PFQN…CNNS). The span at 159 to 168 (PVSSSTNYIP) shows a compositional bias: polar residues. Over residues 169–180 (NNSTSNVVLNSS) the composition is skewed to low complexity. A compositionally biased stretch (polar residues) spans 181–190 (IPTTSPNVLS). 2 stretches are compositionally biased toward low complexity: residues 205–241 (NNNN…NNNN) and 388–410 (TNTN…NNNN). A compositionally biased stretch (polar residues) spans 411–426 (IQQANVNTSPISTSTT). Composition is skewed to low complexity over residues 427 to 456 (PNNN…QQAQ) and 468 to 496 (SITP…GASP). Residues 528 to 539 (STSGMLSTTNPY) are compositionally biased toward polar residues. Over residues 540 to 557 (THHSPNTSSTVSSSVTSP) the composition is skewed to low complexity. A compositionally biased stretch (polar residues) spans 558 to 589 (LINQYGTNPTLTNNHSFYGSLASNQNTGASDG). Composition is skewed to low complexity over residues 590-601 (NNNNNNNNNNNN) and 619-638 (SSNP…SSNS). The segment covering 662–680 (GSGMTTPQSLGHSPSHNDY) has biased composition (polar residues). 2 stretches are compositionally biased toward low complexity: residues 681-706 (NSNN…NSNN) and 713-785 (SNSS…SSNN). A GATA-type zinc finger spans residues 842 to 867 (CHNCGTKNTPEWRRGPSGPATLCNAC). The segment at 925 to 957 (NNASSSSSSSSSSSSSSSSSSSTSSYSSSSYNI) is disordered. The span at 928-954 (SSSSSSSSSSSSSSSSSSSTSSYSSSS) shows a compositional bias: low complexity.

This is GATA zinc finger domain-containing protein 7 (gtaG) from Dictyostelium discoideum (Social amoeba).